The following is a 1122-amino-acid chain: Cytosolic carboxypeptidase 4 (1122 aa).

Positions 287-338 (PGSTSSELPLNLTEEDFDDDGDEEMDKDSDVEAVKEDDDLETDLSKLSSKPG) are disordered. The span at 299-313 (TEEDFDDDGDEEMDK) shows a compositional bias: acidic residues. Positions 731-1021 (YPYTYSTLMT…MYCLGLLILE (291 aa)) constitute a Peptidase M14 domain. Residues His-803, Glu-806, and His-900 each contribute to the Zn(2+) site. Residue Glu-985 is the Proton donor/acceptor of the active site. Positions 1099-1122 (CALNKDEEEEEKEEGTGWRRRSVT) are disordered.

Belongs to the peptidase M14 family. Interacts with MYLK. Interacts with TCF4. It depends on Zn(2+) as a cofactor. As to expression, widely expressed at low level. Expressed in eye, muscle, pituitary, testis and to a lower extent in brain.

It is found in the cytoplasm. Its subcellular location is the cytosol. The enzyme catalyses (L-glutamyl)(n+1)-gamma-L-glutamyl-L-glutamyl-[protein] + H2O = (L-glutamyl)(n)-gamma-L-glutamyl-L-glutamyl-[protein] + L-glutamate. It carries out the reaction C-terminal L-alpha-aminoacyl-L-glutamyl-L-glutamyl-[tubulin] + H2O = C-terminal L-alpha-aminoacyl-L-glutamyl-[tubulin] + L-glutamate. Its function is as follows. Metallocarboxypeptidase that mediates deglutamylation of tubulin and non-tubulin target proteins. Catalyzes the removal of polyglutamate side chains present on the gamma-carboxyl group of glutamate residues within the C-terminal tail of tubulin protein. Specifically cleaves tubulin long-side-chains, while it is not able to remove the branching point glutamate. Also catalyzes the removal of polyglutamate residues from the carboxy-terminus of non-tubulin proteins such as MYLK. The chain is Cytosolic carboxypeptidase 4 from Mus musculus (Mouse).